A 251-amino-acid chain; its full sequence is 2,3-bisphosphoglycerate-dependent phosphoglycerate mutase 2 (251 aa).

Substrate-binding positions include 8 to 15, 21 to 22, Arg60, 87 to 90, Lys98, 114 to 115, and 183 to 184; these read RHGESTWN, TG, ERHY, RR, and GN. Residue His9 is the Tele-phosphohistidine intermediate of the active site. Residue Glu87 is the Proton donor/acceptor of the active site.

It belongs to the phosphoglycerate mutase family. BPG-dependent PGAM subfamily. In terms of assembly, homodimer.

The enzyme catalyses (2R)-2-phosphoglycerate = (2R)-3-phosphoglycerate. It functions in the pathway carbohydrate degradation; glycolysis; pyruvate from D-glyceraldehyde 3-phosphate: step 3/5. In terms of biological role, catalyzes the interconversion of 2-phosphoglycerate and 3-phosphoglycerate. The polypeptide is 2,3-bisphosphoglycerate-dependent phosphoglycerate mutase 2 (Nitrosospira multiformis (strain ATCC 25196 / NCIMB 11849 / C 71)).